A 630-amino-acid polypeptide reads, in one-letter code: Plastin-3 (630 aa).

EF-hand domains follow at residues 12–47 (DELD…ANMP) and 52–87 (KVRE…VKSS). The Ca(2+) site is built by Asp-25, Asn-27, Asn-29, Glu-36, Asp-65, Asn-67, Asp-69, Lys-71, and Glu-76. Actin-binding regions lie at residues 109–382 (TSEL…ALTK) and 383–627 (PENQ…GRGM). Calponin-homology (CH) domains follow at residues 123 to 239 (EEEK…KIGL) and 267 to 378 (LSPE…NKYP). 4 positions are modified to phosphoserine: Ser-268, Ser-293, Ser-326, and Ser-339. At Thr-391 the chain carries Phosphothreonine. 2 Calponin-homology (CH) domains span residues 397 to 506 (TREE…RRYT) and 518 to 627 (KATD…GRGM).

As to quaternary structure, monomer.

The protein resides in the cytoplasm. Actin-bundling protein. This is Plastin-3 (Pls3) from Rattus norvegicus (Rat).